The primary structure comprises 278 residues: Type II restriction enzyme NgoPII (278 aa).

It belongs to the NgoPII type II restriction endonuclease family.

It carries out the reaction Endonucleolytic cleavage of DNA to give specific double-stranded fragments with terminal 5'-phosphates.. Its function is as follows. A P subtype restriction enzyme that recognizes the double-stranded sequence 5'-GGCC-3' and cleaves after G-2. This Neisseria gonorrhoeae protein is Type II restriction enzyme NgoPII (ngoPIIR).